Here is a 227-residue protein sequence, read N- to C-terminus: Probable chorismate pyruvate-lyase (227 aa).

Substrate is bound by residues R75, L113, and E173. The tract at residues S192–R227 is disordered. Positions R200–A212 are enriched in basic and acidic residues.

Belongs to the UbiC family.

The protein resides in the cytoplasm. The enzyme catalyses chorismate = 4-hydroxybenzoate + pyruvate. The protein operates within cofactor biosynthesis; ubiquinone biosynthesis. Removes the pyruvyl group from chorismate, with concomitant aromatization of the ring, to provide 4-hydroxybenzoate (4HB) for the ubiquinone pathway. The chain is Probable chorismate pyruvate-lyase from Paraburkholderia xenovorans (strain LB400).